A 562-amino-acid chain; its full sequence is Arginine--tRNA ligase (562 aa).

Positions Pro122 to His132 match the 'HIGH' region motif.

The protein belongs to the class-I aminoacyl-tRNA synthetase family. Monomer.

Its subcellular location is the cytoplasm. It carries out the reaction tRNA(Arg) + L-arginine + ATP = L-arginyl-tRNA(Arg) + AMP + diphosphate. This chain is Arginine--tRNA ligase, found in Chlamydia felis (strain Fe/C-56) (Chlamydophila felis).